The following is a 226-amino-acid chain: B-cell antigen receptor complex-associated protein alpha chain (226 aa).

Positions 1-32 (MPGGPGVLQALPATIFLLFLLSAVYLGPGCQA) are cleaved as a signal peptide. The region spanning 33-116 (LWMHKVPASL…RVQEGNESYQ (84 aa)) is the Ig-like C2-type domain. Residues 33-143 (LWMHKVPASL…LDMGEGTKNR (111 aa)) lie on the Extracellular side of the membrane. Cysteine 54 and cysteine 106 are joined by a disulfide. Asparagine 57, asparagine 63, asparagine 73, asparagine 88, asparagine 97, and asparagine 112 each carry an N-linked (GlcNAc...) asparagine glycan. Residues 144-165 (IITAEGIILLFCAVVPGTLLLF) traverse the membrane as a helical segment. At 166-226 (RKRWQNEKLG…NIGDVQLEKP (61 aa)) the chain is on the cytoplasmic side. Residues 177-205 (DAGDEYEDENLYEGLNLDDCSMYEDISRG) enclose the ITAM domain. Phosphotyrosine; by SRC-type Tyr-kinases is present on residues tyrosine 188 and tyrosine 199. Asymmetric dimethylarginine; by PRMT1 is present on arginine 204. Tyrosine 210 is modified (phosphotyrosine; by Tyr-kinases).

In terms of assembly, heterodimer of alpha and beta chains; disulfide-linked. Part of the B-cell antigen receptor complex where the alpha/beta chain heterodimer is non-covalently associated with an antigen-specific membrane-bound surface immunoglobulin of two heavy chains and two light chains. Interacts through its phosphorylated ITAM domain with the SH2 domains of SYK which stimulates SYK autophosphorylation and activation. Also interacts, when phosphorylated on Tyr-210, with the SH2 domain of BLNK/SLP65, bringing BLNK into proximity with SYK and allowing SYK to phosphorylate BLNK which is necessary for trafficking of the BCR to late endosomes. Interacts with Src-family tyrosine kinases including FYN and LYN, increasing their activity. Phosphorylated on tyrosine, serine and threonine residues upon B-cell activation. Phosphorylation of tyrosine residues by Src-family kinases is an early and essential feature of the BCR signaling cascade. The phosphorylated tyrosines serve as docking sites for SH2-domain containing kinases, leading to their activation which in turn leads to phosphorylation of downstream targets. Phosphorylated by LYN. Phosphorylation of serine and threonine residues may prevent subsequent tyrosine phosphorylation. In terms of processing, arginine methylation in the ITAM domain may interfere with the binding of SYK. It promotes signals leading to B-cell differentiation. As to expression, B-cells.

It localises to the cell membrane. Required in cooperation with CD79B for initiation of the signal transduction cascade activated by binding of antigen to the B-cell antigen receptor complex (BCR) which leads to internalization of the complex, trafficking to late endosomes and antigen presentation. Also required for BCR surface expression and for efficient differentiation of pro- and pre-B-cells. Stimulates SYK autophosphorylation and activation. Binds to BLNK, bringing BLNK into proximity with SYK and allowing SYK to phosphorylate BLNK. Also interacts with and increases activity of some Src-family tyrosine kinases. Represses BCR signaling during development of immature B-cells. This is B-cell antigen receptor complex-associated protein alpha chain (CD79A) from Homo sapiens (Human).